Reading from the N-terminus, the 191-residue chain is MQREDVLGEALKLLELQGIANTTLEMVAERVDYPLDELRRFWPDKEAILYDALRYLSQQIDVWRRQLMLDETQTAEQKLLARYQALSECVKNNRYPGCLFIAACTFYPDPGHPIHQLADQQKSAAYDFTHELLTTLEVDDPAMVAKQMELVLEGCLSRMLVNRSQADVDTAHRLAEDILRFARCRQGGALT.

The 60-residue stretch at 1-60 folds into the HTH tetR-type domain; it reads MQREDVLGEALKLLELQGIANTTLEMVAERVDYPLDELRRFWPDKEAILYDALRYLSQQI.

The protein is HTH-type transcriptional regulator YjdC (yjdC) of Escherichia coli (strain K12).